We begin with the raw amino-acid sequence, 519 residues long: Protein nucleotidyltransferase YdiU (519 aa).

ATP-binding residues include G100, G102, R103, K123, D135, G136, R193, and R200. The Proton acceptor role is filled by D270. Positions 271 and 280 each coordinate Mg(2+). An ATP-binding site is contributed by D280.

The protein belongs to the SELO family. It depends on Mg(2+) as a cofactor. The cofactor is Mn(2+).

It carries out the reaction L-seryl-[protein] + ATP = 3-O-(5'-adenylyl)-L-seryl-[protein] + diphosphate. The enzyme catalyses L-threonyl-[protein] + ATP = 3-O-(5'-adenylyl)-L-threonyl-[protein] + diphosphate. It catalyses the reaction L-tyrosyl-[protein] + ATP = O-(5'-adenylyl)-L-tyrosyl-[protein] + diphosphate. The catalysed reaction is L-histidyl-[protein] + UTP = N(tele)-(5'-uridylyl)-L-histidyl-[protein] + diphosphate. It carries out the reaction L-seryl-[protein] + UTP = O-(5'-uridylyl)-L-seryl-[protein] + diphosphate. The enzyme catalyses L-tyrosyl-[protein] + UTP = O-(5'-uridylyl)-L-tyrosyl-[protein] + diphosphate. Functionally, nucleotidyltransferase involved in the post-translational modification of proteins. It can catalyze the addition of adenosine monophosphate (AMP) or uridine monophosphate (UMP) to a protein, resulting in modifications known as AMPylation and UMPylation. The sequence is that of Protein nucleotidyltransferase YdiU from Xylella fastidiosa (strain Temecula1 / ATCC 700964).